Here is a 465-residue protein sequence, read N- to C-terminus: 23S rRNA (uracil(1939)-C(5))-methyltransferase RlmD (465 aa).

Residues 1–22 (MSEAVPTSARKSKNAPVAPGPA) are disordered. A TRAM domain is found at 16 to 80 (PVAPGPAPVL…PSYEQATVVD (65 aa)). [4Fe-4S] cluster contacts are provided by Cys-93, Cys-99, Cys-102, and Cys-181. Residues Gln-289, Phe-318, Asn-323, Glu-339, Asn-367, and Asp-388 each coordinate S-adenosyl-L-methionine. The Nucleophile role is filled by Cys-421.

The protein belongs to the class I-like SAM-binding methyltransferase superfamily. RNA M5U methyltransferase family. RlmD subfamily.

The enzyme catalyses uridine(1939) in 23S rRNA + S-adenosyl-L-methionine = 5-methyluridine(1939) in 23S rRNA + S-adenosyl-L-homocysteine + H(+). Functionally, catalyzes the formation of 5-methyl-uridine at position 1939 (m5U1939) in 23S rRNA. This Burkholderia cenocepacia (strain HI2424) protein is 23S rRNA (uracil(1939)-C(5))-methyltransferase RlmD.